The sequence spans 97 residues: Late embryogenesis abundant protein Lea5 (97 aa).

This sequence belongs to the LEA type 3 family.

In Citrus sinensis (Sweet orange), this protein is Late embryogenesis abundant protein Lea5 (LEA5).